The primary structure comprises 755 residues: Putative two-component response regulator-like APRR6 (755 aa).

One can recognise a Response regulatory domain in the interval 14–128 (SILLIDHDTA…DIKNMWQHVF (115 aa)).

It belongs to the ARR-like family.

It localises to the nucleus. This Arabidopsis thaliana (Mouse-ear cress) protein is Putative two-component response regulator-like APRR6 (APRR6).